We begin with the raw amino-acid sequence, 148 residues long: Snaclec 6 (148 aa).

Positions 1–23 (MGRFIFVSFGLLVMFLSLSGTEA) are cleaved as a signal peptide. 3 disulfide bridges follow: C27–C38, C55–C144, and C121–C136. A C-type lectin domain is found at 34 to 145 (YDQNCYKAFE…CSGTHNFVCK (112 aa)). N130 carries N-linked (GlcNAc...) asparagine glycosylation.

This sequence belongs to the snaclec family. As to quaternary structure, heterodimer; disulfide-linked. As to expression, expressed by the venom gland.

The protein resides in the secreted. Functionally, interferes with one step of hemostasis (modulation of platelet aggregation, or coagulation cascade, for example). This chain is Snaclec 6, found in Bitis arietans (African puff adder).